Reading from the N-terminus, the 115-residue chain is V-type proton ATPase subunit G (115 aa).

Belongs to the V-ATPase G subunit family. In terms of assembly, V-ATPase is a heteromultimeric enzyme composed of a peripheral catalytic V1 complex (components A to H) attached to an integral membrane V0 proton pore complex (components: a, c, c', c'', d, e, f and VOA1).

The protein localises to the vacuole membrane. In terms of biological role, subunit of the V1 complex of vacuolar(H+)-ATPase (V-ATPase), a multisubunit enzyme composed of a peripheral complex (V1) that hydrolyzes ATP and a membrane integral complex (V0) that translocates protons. V-ATPase is responsible for acidifying and maintaining the pH of intracellular compartments. This is V-type proton ATPase subunit G (vma-10) from Neurospora crassa (strain ATCC 24698 / 74-OR23-1A / CBS 708.71 / DSM 1257 / FGSC 987).